The chain runs to 197 residues: Probable GTP-binding protein EngB (197 aa).

An EngB-type G domain is found at 25-197 (SAPEIAFAGR…VRDEFFKFTR (173 aa)). GTP is bound by residues 33-40 (GRSNVGKS), 60-64 (GCTRQ), 79-82 (DLPG), 146-149 (TKID), and 177-179 (MSI). Mg(2+) contacts are provided by serine 40 and threonine 62.

Belongs to the TRAFAC class TrmE-Era-EngA-EngB-Septin-like GTPase superfamily. EngB GTPase family. Mg(2+) serves as cofactor.

Its function is as follows. Necessary for normal cell division and for the maintenance of normal septation. The protein is Probable GTP-binding protein EngB of Wolbachia sp. subsp. Drosophila simulans (strain wRi).